Consider the following 369-residue polypeptide: S-(hydroxymethyl)glutathione dehydrogenase (369 aa).

7 residues coordinate Zn(2+): C40, H62, C92, C95, C98, C106, and C169.

It belongs to the zinc-containing alcohol dehydrogenase family. Class-III subfamily. In terms of assembly, homodimer. The cofactor is Zn(2+).

The protein localises to the cytoplasm. It catalyses the reaction S-(hydroxymethyl)glutathione + NADP(+) = S-formylglutathione + NADPH + H(+). It carries out the reaction S-(hydroxymethyl)glutathione + NAD(+) = S-formylglutathione + NADH + H(+). The catalysed reaction is a primary alcohol + NAD(+) = an aldehyde + NADH + H(+). The enzyme catalyses a secondary alcohol + NAD(+) = a ketone + NADH + H(+). It catalyses the reaction S-nitrosoglutathione + NADH + H(+) = S-(hydroxysulfenamide)glutathione + NAD(+). Functionally, has high formaldehyde dehydrogenase activity in the presence of glutathione and catalyzes the oxidation of normal alcohols in a reaction that is not GSH-dependent. In addition, hemithiolacetals other than those formed from GSH, including omega-thiol fatty acids, also are substrates. Also acts as a S-nitroso-glutathione reductase by catalyzing the NADH-dependent reduction of S-nitrosoglutathione. The protein is S-(hydroxymethyl)glutathione dehydrogenase (frmA) of Synechocystis sp. (strain ATCC 27184 / PCC 6803 / Kazusa).